The chain runs to 405 residues: Tryptophan synthase beta chain (405 aa).

Lysine 98 carries the post-translational modification N6-(pyridoxal phosphate)lysine.

The protein belongs to the TrpB family. In terms of assembly, tetramer of two alpha and two beta chains. Requires pyridoxal 5'-phosphate as cofactor.

It catalyses the reaction (1S,2R)-1-C-(indol-3-yl)glycerol 3-phosphate + L-serine = D-glyceraldehyde 3-phosphate + L-tryptophan + H2O. Its pathway is amino-acid biosynthesis; L-tryptophan biosynthesis; L-tryptophan from chorismate: step 5/5. Its function is as follows. The beta subunit is responsible for the synthesis of L-tryptophan from indole and L-serine. This Xylella fastidiosa (strain M23) protein is Tryptophan synthase beta chain.